Consider the following 2493-residue polypeptide: Adenylate cyclase (2493 aa).

Polar residues-rich tracts occupy residues 1 to 18 (MLFT…SPEQ), 42 to 51 (RDSNGSSNFT), 60 to 78 (SQQY…QPDI), 129 to 147 (PANS…SISP), and 197 to 210 (APFS…TSVN). Disordered regions lie at residues 1 to 85 (MLFT…SSTL), 99 to 148 (FEHA…ISPS), 197 to 325 (APFS…SSLS), 355 to 444 (NSPS…QSQS), 475 to 565 (GSIT…VNML), 616 to 660 (QAPV…KTSY), 753 to 832 (NVGE…GSKS), 854 to 882 (ALVQ…GAGA), and 904 to 967 (RPSK…ATGT). Positions 211-233 (PSAASTASPSTSAATRTRPRGGT) are enriched in low complexity. Polar residues-rich tracts occupy residues 234-246 (NASQ…TSFG) and 253-264 (LSSSRSQYSLRP). 2 stretches are compositionally biased toward basic residues: residues 287–303 (AVKK…KKSS) and 404–422 (HLKK…HLAK). Over residues 425 to 434 (KPGEDADSAR) the composition is skewed to basic and acidic residues. Over residues 500 to 525 (PSPSQTPIAERQTSVTSTVESPSHAS) the composition is skewed to polar residues. Residues 534–555 (SLRTPSRTTASTSTSSASTVLS) are compositionally biased toward low complexity. The segment covering 630-640 (TDSELSDRKDS) has biased composition (basic and acidic residues). The segment covering 641–660 (VVSTHSMRSNHSGISPKTSY) has biased composition (polar residues). Positions 754–763 (VGEEEDDDDD) are enriched in acidic residues. 2 stretches are compositionally biased toward low complexity: residues 780–791 (SSSGISSTHASS) and 854–870 (ALVQ…QPSP). A compositionally biased stretch (polar residues) spans 913–935 (RPNTAGSVGATRPSTTTLGSTLS). One can recognise a Ras-associating domain in the interval 970–1072 (RNHFIRVYKT…LRFVFRPDSV (103 aa)). 22 LRR repeats span residues 1086-1107 (TFQH…LYKH), 1110-1132 (WIVS…VQLC), 1134-1155 (SLRT…VRHS), 1157-1178 (TLTH…SLDL), 1181-1202 (ELMS…FSSI), 1204-1225 (TLRN…ICDV), 1227-1248 (SLVD…IANL), 1250-1271 (NLER…MSEL), 1273-1294 (SLRT…LGLP), 1295-1316 (RLQN…LGPQ), 1317-1336 (LTQV…AALT), 1339-1360 (DLTS…LFPQ), 1363-1385 (ALVK…GDLK), 1386-1407 (RLEM…IGDL), 1409-1430 (ALKE…LWLC), 1432-1453 (SLAH…PDIR), 1511-1534 (SLQK…SELT), 1535-1556 (SLEV…SLQT), 1559-1580 (KLRE…DLVV), 1583-1605 (ELRI…GKLK), 1606-1628 (KLAN…HYDW), and 1635-1654 (ELRY…TKLS). Positions 1710-2000 (AYGIADALGK…ESIMVMVISV (291 aa)) constitute a PPM-type phosphatase domain. A Guanylate cyclase domain is found at 2058-2194 (ALVFTDIKNS…PMVNRAARIS (137 aa)). The Mg(2+) site is built by D2063 and D2105. Disordered regions lie at residues 2220 to 2241 (DESS…TEEE), 2354 to 2378 (EADR…HGTA), and 2467 to 2493 (PPRA…ELVP). Positions 2470-2485 (ASTSALSLPSPRTSPR) are enriched in polar residues.

This sequence belongs to the adenylyl cyclase class-3 family. Mg(2+) serves as cofactor.

It catalyses the reaction ATP = 3',5'-cyclic AMP + diphosphate. In terms of biological role, plays essential roles in regulation of cellular metabolism by catalyzing the synthesis of a second messenger, cAMP. This is Adenylate cyclase (UAC1) from Mycosarcoma maydis (Corn smut fungus).